A 445-amino-acid polypeptide reads, in one-letter code: MSERKYFGTDGIRGKVGDSPITPDFVLKLGWAAGKVLARHGSRKIIIGKDTRISGYMLESALEAGLAAAGLSASFTGPMPTPAVAYLTRTFRAEAGIVISASHNPYYDNGIKFFSIDGTKLPDEVEEAIEAEMEKPITCVESAELGRANRIVDAAGRYIEFCKGTFPNENNLNGLKVVVDCAHGATYHIAPNVFRELGAEVITIGCEPTGININDECGATDVRMLQKRVLEEGADVGLAFDGDGDRIIMVDHKGLKVDGDQILYIIAREALRQGQLRGGAVGTLMSNMGLEIALKQLGIPFVRAKVGDRYVLEKLQEKGWRLGAENSGHIILLDKTTTGDGIVAGLQVLSAMVRNHMSLHDLCSGMKLLPQILVNVRFTGNHDPLQSTEVQQVAKEVEAELGGKGRVLLRKSGTEPLIRVMVEGENEEQVTAMANRIADAVKHVG.

The Phosphoserine intermediate role is filled by S102. Mg(2+)-binding residues include S102, D241, D243, and D245. The residue at position 102 (S102) is a Phosphoserine.

The protein belongs to the phosphohexose mutase family. Requires Mg(2+) as cofactor. Post-translationally, activated by phosphorylation.

It catalyses the reaction alpha-D-glucosamine 1-phosphate = D-glucosamine 6-phosphate. Catalyzes the conversion of glucosamine-6-phosphate to glucosamine-1-phosphate. This chain is Phosphoglucosamine mutase, found in Proteus mirabilis (strain HI4320).